Reading from the N-terminus, the 98-residue chain is Protein FAM24A (98 aa).

A signal peptide spans 1–29; sequence MFDLRTKVMIGIASTLLIAAIVLITVVFC.

This sequence belongs to the FAM24 family.

It is found in the secreted. This Rattus norvegicus (Rat) protein is Protein FAM24A (Fam24a).